Here is a 725-residue protein sequence, read N- to C-terminus: Calcium-responsive transcription factor (725 aa).

Residues 572 to 592 form a disordered region; the sequence is TSPDESPAVVSVNNQPSSSPS. A compositionally biased stretch (low complexity) spans 577–592; it reads SPAVVSVNNQPSSSPS.

The protein resides in the nucleus. Functionally, acts as a transcriptional activator that mediates the calcium- and neuron-selective induction of BDNF exon III transcription. Binds to the consensus calcium-response element CaRE1 5'-CTATTTCGAG-3' sequence. The polypeptide is Calcium-responsive transcription factor (CARF) (Homo sapiens (Human)).